Here is a 350-residue protein sequence, read N- to C-terminus: LIM domain-containing protein unc-95 (350 aa).

A compositionally biased stretch (polar residues) spans 1-37 (MTISPQPSHQQFESYQWTTESRSSQQRHGTGTPSQDG). Residues 1 to 65 (MTISPQPSHQ…ESRNSNKDKV (65 aa)) are disordered. Over residues 45–65 (PVERHVARWRSESRNSNKDKV) the composition is skewed to basic and acidic residues. Positions 83–110 (LTALKNDVEQTTEIIRRKQEQMRMERRQ) form a coiled coil. Disordered regions lie at residues 177–198 (RRGQ…EIEY), 206–225 (PEEQ…METD), and 235–262 (MSEE…SGSP). The 67-residue stretch at 268 to 334 (AVCAYCSEEI…HDCFYKLYNG (67 aa)) folds into the LIM zinc-binding domain.

Post-translationally, ubiquitinated. Ubiquitination by rnf-5 leads to dissociation from muscle dense bodies during molting and is required for ecdysis. As to expression, expressed in the body wall muscles, vulval muscles and the anal muscles. Expressed in the muscle arms of the head muscle cells that form neuromuscular junctions and in the anal depressor muscle.

It localises to the cytoplasm. It is found in the nucleus. The protein resides in the cell membrane. Its subcellular location is the myofibril. The protein localises to the sarcomere. It localises to the m line. It is found in the cell junction. The protein resides in the focal adhesion. Functionally, required for the assembly and integrity of muscle dense bodies, which establish the adhesion sites of the muscle cells to the extracellular matrix. Decreased localization of unc-95 to dense bodies and their subsequent dissociation plays an important role in ecdysis during molting. Involved in the organization of the muscle sarcomeric structure and thereby required for locomotion. This chain is LIM domain-containing protein unc-95, found in Caenorhabditis elegans.